A 311-amino-acid polypeptide reads, in one-letter code: Ribosomal protein L11 methyltransferase (311 aa).

Residues Thr162, Gly183, Asp205, and Asn248 each coordinate S-adenosyl-L-methionine.

Belongs to the methyltransferase superfamily. PrmA family.

Its subcellular location is the cytoplasm. The enzyme catalyses L-lysyl-[protein] + 3 S-adenosyl-L-methionine = N(6),N(6),N(6)-trimethyl-L-lysyl-[protein] + 3 S-adenosyl-L-homocysteine + 3 H(+). Methylates ribosomal protein L11. The sequence is that of Ribosomal protein L11 methyltransferase from Bacillus subtilis (strain 168).